The chain runs to 679 residues: Methionine--tRNA ligase (679 aa).

Residues 14–24 carry the 'HIGH' region motif; it reads PYANGSIHLGH. Positions 145, 148, 158, and 161 each coordinate Zn(2+). A 'KMSKS' region motif is present at residues 331-335; the sequence is KMSKS. Lysine 334 contacts ATP. The tRNA-binding domain occupies 577–679; that stretch reads TFAAVDLRVA…SGAKPGQRIK (103 aa).

This sequence belongs to the class-I aminoacyl-tRNA synthetase family. MetG type 1 subfamily. Homodimer. It depends on Zn(2+) as a cofactor.

It is found in the cytoplasm. The enzyme catalyses tRNA(Met) + L-methionine + ATP = L-methionyl-tRNA(Met) + AMP + diphosphate. Its function is as follows. Is required not only for elongation of protein synthesis but also for the initiation of all mRNA translation through initiator tRNA(fMet) aminoacylation. This is Methionine--tRNA ligase from Pseudomonas putida (strain GB-1).